We begin with the raw amino-acid sequence, 252 residues long: Small ribosomal subunit protein uS3 (252 aa).

One can recognise a KH type-2 domain in the interval 39-109 (IRNYVQTRLK…EVKIDVVEVV (71 aa)). A compositionally biased stretch (basic and acidic residues) spans 221–241 (EMKRIKERRSDSGPRSRNDRS). The tract at residues 221 to 252 (EMKRIKERRSDSGPRSRNDRSQKRRRRPNDRG) is disordered. Residues 242-252 (QKRRRRPNDRG) show a composition bias toward basic residues.

The protein belongs to the universal ribosomal protein uS3 family. Part of the 30S ribosomal subunit. Forms a tight complex with proteins S10 and S14.

Its function is as follows. Binds the lower part of the 30S subunit head. Binds mRNA in the 70S ribosome, positioning it for translation. The polypeptide is Small ribosomal subunit protein uS3 (Chlorobium luteolum (strain DSM 273 / BCRC 81028 / 2530) (Pelodictyon luteolum)).